Here is a 550-residue protein sequence, read N- to C-terminus: Transcription factor 7-like 1-D (550 aa).

The segment at 1-61 (MPQLNSGXGD…SENHSSDSDS (61 aa)) is interaction with CTNNB1-A. 4 disordered regions span residues 1–77 (MPQL…EKPR), 182–212 (GTPP…PYYP), 390–473 (WSAR…SLTT), and 488–514 (ASKS…SRPI). Composition is skewed to basic and acidic residues over residues 17–32 (ELIR…EKSP) and 52–77 (SENH…EKPR). Residues 109–311 (LGGITCPMVP…SPNLSMKSNV (203 aa)) are interaction with AES and TLE4-A. The segment at residues 323-391 (IKKPLNAFML…LHSQLYPSWS (69 aa)) is a DNA-binding region (HMG box). Residues 406–415 (KQSPEMENYT) show a composition bias toward basic and acidic residues. The interval 407 to 550 (QSPEMENYTK…PLPLVARSSD (144 aa)) is interaction with CTBP-B. Positions 444–455 (SPATPSAALASP) are enriched in low complexity.

It belongs to the TCF/LEF family. Interacts with csnk1e, ctnnb1-A, ctbp-B, dact1-A and gsk3b. May interact with ase and tle4-A. Post-translationally, phosphorylated. Phosphorylation by csnk1e promotes binding to ctnnb1-A while phosphorylation by gsk3b may reverse this effect.

It is found in the nucleus. Its function is as follows. Participates in the Wnt signaling pathway. Binds to DNA and acts as a repressor in the absence of ctnnb1-A and possibly ctnnb1-B, and as an activator in the presence of these proteins. Required early in development for the establishment of the dorsal body axis in response to maternal Wnt signaling. The chain is Transcription factor 7-like 1-D (tcf7l1-d) from Xenopus laevis (African clawed frog).